The following is a 310-amino-acid chain: N-acetyl-gamma-glutamyl-phosphate reductase (310 aa).

Cysteine 117 is a catalytic residue.

The protein belongs to the NAGSA dehydrogenase family. Type 2 subfamily.

Its subcellular location is the cytoplasm. The enzyme catalyses N-acetyl-L-glutamate 5-semialdehyde + phosphate + NADP(+) = N-acetyl-L-glutamyl 5-phosphate + NADPH + H(+). Its pathway is amino-acid biosynthesis; L-arginine biosynthesis; N(2)-acetyl-L-ornithine from L-glutamate: step 3/4. Its function is as follows. Catalyzes the NADPH-dependent reduction of N-acetyl-5-glutamyl phosphate to yield N-acetyl-L-glutamate 5-semialdehyde. This chain is N-acetyl-gamma-glutamyl-phosphate reductase, found in Brucella melitensis biotype 1 (strain ATCC 23456 / CCUG 17765 / NCTC 10094 / 16M).